The chain runs to 62 residues: Large ribosomal subunit protein uL30 (62 aa).

It belongs to the universal ribosomal protein uL30 family. In terms of assembly, part of the 50S ribosomal subunit.

The polypeptide is Large ribosomal subunit protein uL30 (Paracoccus denitrificans (strain Pd 1222)).